The chain runs to 117 residues: Pterin-4-alpha-carbinolamine dehydratase 2 (117 aa).

Residues Lys101, Lys105, and Lys112 each carry the N6-acetyllysine; alternate modification. Residues Lys101, Lys105, and Lys112 each carry the N6-succinyllysine; alternate modification.

This sequence belongs to the pterin-4-alpha-carbinolamine dehydratase family. Homotetramer. Interacts with DYRK1B.

The enzyme catalyses (4aS,6R)-4a-hydroxy-L-erythro-5,6,7,8-tetrahydrobiopterin = (6R)-L-erythro-6,7-dihydrobiopterin + H2O. Its function is as follows. Involved in tetrahydrobiopterin biosynthesis. Seems to both prevent the formation of 7-pterins and accelerate the formation of quinonoid-BH2. In terms of biological role, regulates the dimerization of homeodomain protein HNF-1-alpha and enhances its transcriptional activity. The chain is Pterin-4-alpha-carbinolamine dehydratase 2 (PCBD2) from Pongo abelii (Sumatran orangutan).